Here is a 114-residue protein sequence, read N- to C-terminus: Progonadoliberin-2 (114 aa).

A signal peptide spans 1–25; that stretch reads MASSMLGFLLLLLLLMAAHPGPSEA. The segment at 22–80 is disordered; sequence PSEAQHWSHGWYPGGKRASNSPQDPQSALRPPAPSAAQTAHSFRSAALASPEDSVPWEG. Glycine 35 carries the glycine amide modification.

It belongs to the GnRH family. In terms of tissue distribution, midbrain.

The protein localises to the secreted. Stimulates the secretion of gonadotropins; it stimulates the secretion of both luteinizing and follicle-stimulating hormones. This chain is Progonadoliberin-2 (GNRH2), found in Tupaia belangeri (Common tree shrew).